The following is a 358-amino-acid chain: Chorismate synthase (358 aa).

Position 46 (arginine 46) interacts with NADP(+). Residues 123–125 (RSS), 235–236 (NA), glycine 275, 290–294 (KATPS), and arginine 316 each bind FMN.

This sequence belongs to the chorismate synthase family. Homotetramer. FMNH2 serves as cofactor.

It catalyses the reaction 5-O-(1-carboxyvinyl)-3-phosphoshikimate = chorismate + phosphate. Its pathway is metabolic intermediate biosynthesis; chorismate biosynthesis; chorismate from D-erythrose 4-phosphate and phosphoenolpyruvate: step 7/7. Its function is as follows. Catalyzes the anti-1,4-elimination of the C-3 phosphate and the C-6 proR hydrogen from 5-enolpyruvylshikimate-3-phosphate (EPSP) to yield chorismate, which is the branch point compound that serves as the starting substrate for the three terminal pathways of aromatic amino acid biosynthesis. This reaction introduces a second double bond into the aromatic ring system. This chain is Chorismate synthase, found in Aliarcobacter butzleri (strain RM4018) (Arcobacter butzleri).